A 413-amino-acid chain; its full sequence is Divalent metal cation transporter MntH (413 aa).

11 helical membrane-spanning segments follow: residues L19–A39, A46–I66, V94–I114, L122–I142, V156–Q176, A196–H216, I241–F261, I290–G310, A329–L349, V350–F370, and V392–V412.

Belongs to the NRAMP family.

Its subcellular location is the cell inner membrane. Functionally, h(+)-stimulated, divalent metal cation uptake system. In Klebsiella pneumoniae (strain 342), this protein is Divalent metal cation transporter MntH.